A 114-amino-acid chain; its full sequence is uncharacterized protein (114 aa).

The 96-residue stretch at 2 to 97 (ESEPLYKLKA…VARKVLARVL (96 aa)) folds into the HTH arsR-type domain. The segment at residues 37-60 (GELLSSDVGLESSNLSQQLGVLRR) is a DNA-binding region (H-T-H motif).

This is an uncharacterized protein from Mycobacterium tuberculosis (strain CDC 1551 / Oshkosh).